A 245-amino-acid chain; its full sequence is 5'-nucleotidase SurE (245 aa).

Residues D8, D9, S39, and N91 each contribute to the a divalent metal cation site.

This sequence belongs to the SurE nucleotidase family. A divalent metal cation is required as a cofactor.

The protein resides in the cytoplasm. It carries out the reaction a ribonucleoside 5'-phosphate + H2O = a ribonucleoside + phosphate. Nucleotidase that shows phosphatase activity on nucleoside 5'-monophosphates. This chain is 5'-nucleotidase SurE, found in Janthinobacterium sp. (strain Marseille) (Minibacterium massiliensis).